The chain runs to 504 residues: Arabinose import ATP-binding protein AraG (504 aa).

ABC transporter domains are found at residues 8-243 and 256-499; these read LSFR…MVGR and YGEE…MPKV. 40-47 provides a ligand contact to ATP; the sequence is GENGAGKS.

The protein belongs to the ABC transporter superfamily. Arabinose importer (TC 3.A.1.2.2) family. In terms of assembly, the complex is composed of two ATP-binding proteins (AraG), two transmembrane proteins (AraH) and a solute-binding protein (AraF).

The protein localises to the cell inner membrane. The catalysed reaction is L-arabinose(out) + ATP + H2O = L-arabinose(in) + ADP + phosphate + H(+). Functionally, part of the ABC transporter complex AraFGH involved in arabinose import. Responsible for energy coupling to the transport system. This Shigella sonnei (strain Ss046) protein is Arabinose import ATP-binding protein AraG.